A 76-amino-acid polypeptide reads, in one-letter code: Large ribosomal subunit protein uL24 (76 aa).

The protein belongs to the universal ribosomal protein uL24 family. Part of the 50S ribosomal subunit.

One of two assembly initiator proteins, it binds directly to the 5'-end of the 23S rRNA, where it nucleates assembly of the 50S subunit. Its function is as follows. One of the proteins that surrounds the polypeptide exit tunnel on the outside of the subunit. The polypeptide is Large ribosomal subunit protein uL24 (Sulfurimonas denitrificans (strain ATCC 33889 / DSM 1251) (Thiomicrospira denitrificans (strain ATCC 33889 / DSM 1251))).